A 367-amino-acid chain; its full sequence is MSLSEQVLAVNDDLPIRTDKPVHSGKVRSVYWLTEEDSRRLIKEKGYNVAPDAPLAIMVISDRISAFDCIWHGEGGLKGIPGKGAALNAISNHWFQLFKDNNLADSHILDIPHPFVWIVQKAKPVMIEAICRQYITGSMWRAYTNGEREFCGIQIPERLEKDEELADLLLTPSTKGVLKGIEGVSEVDDVNITRKDIENNFSAFNFSSIEDIALYEKLLKEGFAVISKALNDIDQIFVDTKFEFGYVNDAQGNEKLIYMDEVGTPDSSRIWDKNAYRSGHIIENSKEGFRQFLLNHFPEPDILLNKNRMDERFALATENSLPLEAMMDLSKTYLDIAAKITGAPIMLSDNPKAEIIKVLKEQYQLVD.

The protein belongs to the SAICAR synthetase family.

It catalyses the reaction 5-amino-1-(5-phospho-D-ribosyl)imidazole-4-carboxylate + L-aspartate + ATP = (2S)-2-[5-amino-1-(5-phospho-beta-D-ribosyl)imidazole-4-carboxamido]succinate + ADP + phosphate + 2 H(+). The protein operates within purine metabolism; IMP biosynthesis via de novo pathway; 5-amino-1-(5-phospho-D-ribosyl)imidazole-4-carboxamide from 5-amino-1-(5-phospho-D-ribosyl)imidazole-4-carboxylate: step 1/2. The protein is Phosphoribosylaminoimidazole-succinocarboxamide synthase of Aliivibrio salmonicida (strain LFI1238) (Vibrio salmonicida (strain LFI1238)).